Reading from the N-terminus, the 349-residue chain is Ureidoglycolate dehydrogenase (NAD(+)) (349 aa).

Residue His-116 is the Proton acceptor of the active site. NAD(+)-binding positions include Ser-140, 174–176 (DMA), Lys-224, and 306–308 (GQD).

The protein belongs to the LDH2/MDH2 oxidoreductase family. As to quaternary structure, homodimer.

The protein localises to the cytoplasm. The catalysed reaction is (S)-ureidoglycolate + NAD(+) = N-carbamoyl-2-oxoglycine + NADH + H(+). It participates in nitrogen metabolism; (S)-allantoin degradation; oxalurate from (S)-ureidoglycolate: step 1/1. Functionally, allD plays a pivotal role as a metabolic branch-point enzyme in nitrogen utilization via the assimilation of allantoin. It is able to utilize allantoin as a sole source of nitrogen under anaerobic conditions. Catalyzes the oxidation of ureidoglycolate to oxalurate. The sequence is that of Ureidoglycolate dehydrogenase (NAD(+)) from Escherichia coli O157:H7.